The following is a 110-amino-acid chain: UPF0145 protein Blon_0093/BLIJ_0092 (110 aa).

It belongs to the UPF0145 family.

The chain is UPF0145 protein Blon_0093/BLIJ_0092 from Bifidobacterium longum subsp. infantis (strain ATCC 15697 / DSM 20088 / JCM 1222 / NCTC 11817 / S12).